The chain runs to 129 residues: RutC family protein PM1466 (129 aa).

This sequence belongs to the RutC family.

The protein is RutC family protein PM1466 of Pasteurella multocida (strain Pm70).